Here is a 319-residue protein sequence, read N- to C-terminus: Beta-ketoacyl-[acyl-carrier-protein] synthase III (319 aa).

Active-site residues include C115 and H246. Positions 247 to 251 (QANLR) are ACP-binding. Residue N276 is part of the active site.

Belongs to the thiolase-like superfamily. FabH family. Homodimer.

Its subcellular location is the cytoplasm. It catalyses the reaction malonyl-[ACP] + acetyl-CoA + H(+) = 3-oxobutanoyl-[ACP] + CO2 + CoA. Its pathway is lipid metabolism; fatty acid biosynthesis. In terms of biological role, catalyzes the condensation reaction of fatty acid synthesis by the addition to an acyl acceptor of two carbons from malonyl-ACP. Catalyzes the first condensation reaction which initiates fatty acid synthesis and may therefore play a role in governing the total rate of fatty acid production. Possesses both acetoacetyl-ACP synthase and acetyl transacylase activities. Its substrate specificity determines the biosynthesis of branched-chain and/or straight-chain of fatty acids. This chain is Beta-ketoacyl-[acyl-carrier-protein] synthase III, found in Coxiella burnetii (strain RSA 331 / Henzerling II).